Here is a 456-residue protein sequence, read N- to C-terminus: Putative sodium-coupled neutral amino acid transporter 11 (456 aa).

The segment at 1–25 is disordered; it reads MRAGPRRQHLLPPQDNRAAVGYQRQ. The helical transmembrane segment at 58-78 threads the bilayer; sequence FNVVNSIIGSGIIDFSLILLI. Asparagine 94 is a glycosylation site (N-linked (GlcNAc...) asparagine). 6 helical membrane passes run 98–118, 143–163, 171–191, 206–226, 252–272, and 291–313; these read GFPG…IAMI, VFIG…LPLS, LGKV…IVMA, AWVF…FAFI, MSIV…YLTF, and VTFG…CFVT. N-linked (GlcNAc...) asparagine glycosylation is present at asparagine 325. A run of 3 helical transmembrane segments spans residues 329–349, 351–371, and 390–410; these read VFHI…SLLI, CLGI…IFII, and IMSY…FVMA.

This sequence belongs to the amino acid/polyamine transporter 2 family.

It is found in the membrane. In terms of biological role, putative sodium-dependent amino acid/proton antiporter. This chain is Putative sodium-coupled neutral amino acid transporter 11 (SLC38A11), found in Macaca fascicularis (Crab-eating macaque).